The primary structure comprises 185 residues: Methanol dehydrogenase activator (185 aa).

This sequence belongs to the Nudix hydrolase family. Homodimer. It depends on Mg(2+) as a cofactor.

Involved in the activation of the NAD-dependent methanol dehydrogenase (MDH). MDH activation by Act involves hydrolytic removal of the nicotinamide mononucleotide (NMN) moiety of the NAD cofactor, changing its ping-pong type of reaction mechanism into a ternary complex reaction mechanism. It requires the presence of magnesium ions and is also able to use ADP-ribose. The protein is Methanol dehydrogenase activator of Bacillus methanolicus.